A 1379-amino-acid polypeptide reads, in one-letter code: Partitioning defective protein 3 (1379 aa).

Over residues 1–23 the composition is skewed to low complexity; the sequence is MSASSTSSSSTSCPEGGEPSGSC. Disordered regions lie at residues 1–32 and 208–335; these read MSAS…GEST and YNVG…SDRK. Composition is skewed to polar residues over residues 239 to 256 and 272 to 284; these read SFDQ…PKPS and ILRS…ASGS. 2 stretches are compositionally biased toward basic and acidic residues: residues 302–315 and 322–335; these read EVEK…ERKS and DKNP…SDRK. PDZ domains are found at residues 381-483 and 515-599; these read LVTF…IINR and VVEL…SRVS. Positions 606-626 form a coiled coil; sequence TSASSENKENEETLKVVEEEK. The PDZ 3 domain maps to 659 to 750; sequence VIPFINGSSS…EVGMISSNVR (92 aa). Disordered stretches follow at residues 767–873, 887–918, 949–1085, 1273–1301, and 1350–1379; these read DLSR…MGAA, HQRQ…RSPM, QSME…GGNV, VEPV…SGSS, and AYET…FPQY. 2 stretches are compositionally biased toward low complexity: residues 776–786 and 798–826; these read SSPSPSSRMSS and ATRG…AVPA. 2 stretches are compositionally biased toward basic and acidic residues: residues 828–844 and 854–869; these read LTER…RNDE and FNRE…EKRG. Over residues 894–912 the composition is skewed to low complexity; that stretch reads PTSSTQKRSKSQPRSSSQR. Over residues 967 to 977 the composition is skewed to polar residues; it reads QIPTGSSSKVQ. Composition is skewed to basic and acidic residues over residues 1030 to 1040 and 1048 to 1060; these read KSRDASPEKTP and SVER…DERN. Over residues 1290 to 1301 the composition is skewed to low complexity; the sequence is STSSGAVASGSS.

This sequence belongs to the PAR3 family. In terms of assembly, required, together with pkc-3, for the localization of par-6; par-6 is involved in localizing/maintaining par-3 at the cell periphery. Interacts with par-6 and pkc-3 for localization at the periphery of anterior cortex of the embryo. In terms of tissue distribution, asymmetrically distributed at the periphery of the zygote and in dividing blastomeres of the germline lineage. Coexpressed with par-6; patchy expression observed at the periphery after completion of meiosis I and in meiosis II. On completion of metaphase II, expression is restricted to the anterior 85% of embryo length; this decreases to 55% in embryos between prophase and telophase of the first mitosis. During the first cleavage, expression is detected in the advancing furrow. Transiently coexpressed and colocalized asymmetrically with par-6 and pkc-3, in the developing somatic gonad, including the spermathecal precursor cells of L4 larvae.

The protein resides in the cytoplasm. In terms of biological role, in cooperation with pkc-3, required for establishing cell polarity and regulating spindle orientation in the early embryo. Localization is crucial for recruiting par-6 and pkc-3 to the peripheral apical cortex and restricting par-2 to basolateral surfaces. Necessary for apicobasal and anterior-posterior asymmetries associated with cell adhesion and gastrulation during the first few cycles of embryogenesis, and also for epithelial cell polarity in the distal spermatheca. Regulates the asymmetric localization of csnk-1, ppk-1 and gpr-1/2 during the first embryonic division. This is Partitioning defective protein 3 from Caenorhabditis elegans.